We begin with the raw amino-acid sequence, 73 residues long: UPF0352 protein APL_0584 (73 aa).

It belongs to the UPF0352 family.

This chain is UPF0352 protein APL_0584, found in Actinobacillus pleuropneumoniae serotype 5b (strain L20).